Here is a 230-residue protein sequence, read N- to C-terminus: Proteasome subunit beta 2 (230 aa).

Positions 1–10 (MHDPENRLTD) are enriched in basic and acidic residues. The tract at residues 1 to 29 (MHDPENRLTDAYEPEVGNLPNEDSGRDEE) is disordered. Residues 1-35 (MHDPENRLTDAYEPEVGNLPNEDSGRDEENVVKTG) constitute a propeptide, removed in mature form; by autocatalysis. T36 serves as the catalytic Nucleophile.

The protein belongs to the peptidase T1B family. In terms of assembly, the 20S proteasome core is composed of 14 alpha and 14 beta subunits that assemble into four stacked heptameric rings, resulting in a barrel-shaped structure. The two inner rings, each composed of seven catalytic beta subunits, are sandwiched by two outer rings, each composed of seven alpha subunits. The catalytic chamber with the active sites is on the inside of the barrel. Has a gated structure, the ends of the cylinder being occluded by the N-termini of the alpha-subunits. Is capped at one or both ends by the proteasome regulatory ATPase, PAN.

It is found in the cytoplasm. The catalysed reaction is Cleavage of peptide bonds with very broad specificity.. Its activity is regulated as follows. The formation of the proteasomal ATPase PAN-20S proteasome complex, via the docking of the C-termini of PAN into the intersubunit pockets in the alpha-rings, triggers opening of the gate for substrate entry. Interconversion between the open-gate and close-gate conformations leads to a dynamic regulation of the 20S proteasome proteolysis activity. Its function is as follows. Component of the proteasome core, a large protease complex with broad specificity involved in protein degradation. The protein is Proteasome subunit beta 2 of Haloarcula marismortui (strain ATCC 43049 / DSM 3752 / JCM 8966 / VKM B-1809) (Halobacterium marismortui).